The primary structure comprises 688 residues: G protein-coupled receptor kinase 3 (688 aa).

An N-terminal region spans residues 1–190 (MADLEAVLAD…ELNIHLSMND (190 aa)). Residues 54–175 (TFDKIFNQKI…MESDKFTRFC (122 aa)) form the RGS domain. One can recognise a Protein kinase domain in the interval 191 to 453 (FSVHRIIGRG…ARELKEHIFF (263 aa)). ATP-binding positions include 197–205 (IGRGGFGEV) and Lys220. Asp317 serves as the catalytic Proton acceptor. The AGC-kinase C-terminal domain occupies 454 to 521 (KGIDWQHVYL…VISERWQQEV (68 aa)). Residues 558–652 (DCIMHGYMLK…WLKELTCTFN (95 aa)) enclose the PH domain.

Belongs to the protein kinase superfamily. AGC Ser/Thr protein kinase family. GPRK subfamily. In terms of assembly, interacts with GIT1. In terms of processing, ubiquitinated.

It is found in the postsynapse. The protein resides in the presynapse. It catalyses the reaction [beta-adrenergic receptor] + ATP = [beta-adrenergic receptor]-phosphate + ADP + H(+). Functionally, specifically phosphorylates the agonist-occupied form of the beta-adrenergic and closely related receptors. The chain is G protein-coupled receptor kinase 3 from Mus musculus (Mouse).